The chain runs to 828 residues: E3 ubiquitin-protein ligase bre-1 (828 aa).

Residues 1-25 (MMKRNNEGIGGEGVANSPPDDTQQK) form a disordered region. The segment at 1–309 (MMKRNNEGIG…SREIEALRAD (309 aa)) is interaction with ubc-1. Coiled coils occupy residues 53 to 92 (QAAK…FLKV) and 185 to 251 (HKEL…TEKQ). Positions 269-298 (ASGNATASSSATLNQSEKKMGSPGSPPSES) are enriched in low complexity. The disordered stretch occupies residues 269–304 (ASGNATASSSATLNQSEKKMGSPGSPPSESTSREIE). Coiled coils occupy residues 311-345 (DEQA…KMET), 460-616 (VNTL…RNLK), and 660-756 (DEVL…NDSA). An RING-type zinc finger spans residues 776-815 (CPSCKTRPKDCIMLKCYHLFCETCIKTMYDTRQRKCPKCN).

This sequence belongs to the BRE1 family. Interacts with ubc-1. Interacts with mrg-1.

It localises to the nucleus. The catalysed reaction is S-ubiquitinyl-[E2 ubiquitin-conjugating enzyme]-L-cysteine + [acceptor protein]-L-lysine = [E2 ubiquitin-conjugating enzyme]-L-cysteine + N(6)-ubiquitinyl-[acceptor protein]-L-lysine.. Its pathway is protein modification; protein ubiquitination. In terms of biological role, E3 ubiquitin-protein ligase that mediates monoubiquitination of 'Lys-117' of histone H2B. H2B 'Lys-117' ubiquitination gives a specific tag for epigenetic transcriptional activation and is also prerequisite for histone H3 'Lys-4' and 'Lys-79' methylation. Involved in regulating stem cell proliferative fate. This is E3 ubiquitin-protein ligase bre-1 from Caenorhabditis briggsae.